The chain runs to 407 residues: Digeranylgeranylglycerophospholipid reductase (407 aa).

Residues alanine 15, glutamate 34, cysteine 45, alanine 46, glycine 48, arginine 99, alanine 123, aspartate 281, glycine 293, and isoleucine 294 each contribute to the FAD site.

This sequence belongs to the geranylgeranyl reductase family. DGGGPL reductase subfamily. It depends on FAD as a cofactor.

It catalyses the reaction a 2,3-bis-O-phytanyl-sn-glycerol 1-phospholipid + 8 oxidized 2[4Fe-4S]-[ferredoxin] = a 2,3-bis-O-(geranylgeranyl)-sn-glycerol 1-phospholipid + 8 reduced 2[4Fe-4S]-[ferredoxin] + 16 H(+). The catalysed reaction is 2,3-bis-O-(phytanyl)-sn-glycerol 1-phosphate + 8 oxidized 2[4Fe-4S]-[ferredoxin] = 2,3-bis-O-(geranylgeranyl)-sn-glycerol 1-phosphate + 8 reduced 2[4Fe-4S]-[ferredoxin] + 16 H(+). It carries out the reaction a 2,3-bis-O-phytanyl-sn-glycerol 1-phospholipid + 8 A = a 2,3-bis-O-(geranylgeranyl)-sn-glycerol 1-phospholipid + 8 AH2. The enzyme catalyses CDP-2,3-bis-O-(geranylgeranyl)-sn-glycerol + 8 AH2 = CDP-2,3-bis-O-(phytanyl)-sn-glycerol + 8 A. It catalyses the reaction archaetidylserine + 8 AH2 = 2,3-bis-O-phytanyl-sn-glycero-3-phospho-L-serine + 8 A. Its pathway is membrane lipid metabolism; glycerophospholipid metabolism. Is involved in the reduction of 2,3-digeranylgeranylglycerophospholipids (unsaturated archaeols) into 2,3-diphytanylglycerophospholipids (saturated archaeols) in the biosynthesis of archaeal membrane lipids. Catalyzes the formation of archaetidic acid (2,3-di-O-phytanyl-sn-glyceryl phosphate) from 2,3-di-O-geranylgeranylglyceryl phosphate (DGGGP) via the hydrogenation of each double bond of the isoprenoid chains. Is also probably able to reduce double bonds of geranyl groups in CDP-2,3-bis-O-(geranylgeranyl)-sn-glycerol and archaetidylserine, thus acting at various stages in the biosynthesis of archaeal membrane lipids. In Methanosarcina mazei (strain ATCC BAA-159 / DSM 3647 / Goe1 / Go1 / JCM 11833 / OCM 88) (Methanosarcina frisia), this protein is Digeranylgeranylglycerophospholipid reductase.